The primary structure comprises 382 residues: Chorismate synthase (382 aa).

NADP(+)-binding residues include Arg39 and Arg45. FMN contacts are provided by residues 128-130 (RAS), 246-247 (QA), Ala290, 305-309 (KPIAT), and Arg331.

This sequence belongs to the chorismate synthase family. As to quaternary structure, homotetramer. FMNH2 serves as cofactor.

It carries out the reaction 5-O-(1-carboxyvinyl)-3-phosphoshikimate = chorismate + phosphate. Its pathway is metabolic intermediate biosynthesis; chorismate biosynthesis; chorismate from D-erythrose 4-phosphate and phosphoenolpyruvate: step 7/7. Catalyzes the anti-1,4-elimination of the C-3 phosphate and the C-6 proR hydrogen from 5-enolpyruvylshikimate-3-phosphate (EPSP) to yield chorismate, which is the branch point compound that serves as the starting substrate for the three terminal pathways of aromatic amino acid biosynthesis. This reaction introduces a second double bond into the aromatic ring system. The protein is Chorismate synthase of Deinococcus geothermalis (strain DSM 11300 / CIP 105573 / AG-3a).